Reading from the N-terminus, the 196-residue chain is Putative 3-methyladenine DNA glycosylase (196 aa).

This sequence belongs to the DNA glycosylase MPG family.

This chain is Putative 3-methyladenine DNA glycosylase (yxlJ), found in Bacillus subtilis (strain 168).